The chain runs to 82 residues: Beta-neurotoxin Css9 (82 aa).

Residues M1–S17 form the signal peptide. The LCN-type CS-alpha/beta domain maps to K18 to R81. 4 disulfide bridges follow: C28-C80, C32-C54, C39-C61, and C43-C63.

Belongs to the long (4 C-C) scorpion toxin superfamily. Sodium channel inhibitor family. Beta subfamily. In terms of tissue distribution, expressed by the venom gland.

The protein localises to the secreted. Its function is as follows. Beta toxins bind voltage-independently at site-4 of sodium channels (Nav) and shift the voltage of activation toward more negative potentials thereby affecting sodium channel activation and promoting spontaneous and repetitive firing. This toxin compete with high affinity with 125I-Css4 bound on rat brain synaptosome and may bind with high affinity to Nav1.1/SCN1A, Nav1.2/SCN2A and Nav1.6/SCN8A. This chain is Beta-neurotoxin Css9, found in Centruroides suffusus (Durango bark scorpion).